Here is a 278-residue protein sequence, read N- to C-terminus: Ribonuclease HII (278 aa).

The region spanning 71–259 is the RNase H type-2 domain; the sequence is WPVAGCDEAG…VAAAWDKHAP (189 aa). Residues D77, E78, and D168 each contribute to the a divalent metal cation site.

This sequence belongs to the RNase HII family. It depends on Mn(2+) as a cofactor. The cofactor is Mg(2+).

It localises to the cytoplasm. It catalyses the reaction Endonucleolytic cleavage to 5'-phosphomonoester.. Its function is as follows. Endonuclease that specifically degrades the RNA of RNA-DNA hybrids. The protein is Ribonuclease HII of Rhodopseudomonas palustris (strain BisA53).